A 589-amino-acid chain; its full sequence is O-fucosyltransferase 11 (589 aa).

The tract at residues 1 to 37 is disordered; sequence MKSKIHHQPNGSNNGVVSSNDNGCRSESPSPPLSPNR. The segment covering 10–23 has biased composition (low complexity); sequence NGSNNGVVSSNDNG. A helical; Signal-anchor for type II membrane protein transmembrane segment spans residues 68-88; it reads MIYASGLLMCVGPFSGLVGWV. N-linked (GlcNAc...) asparagine glycosylation is found at Asn112, Asn136, and Asn239. Residue 332–334 coordinates substrate; the sequence is HLR. N-linked (GlcNAc...) asparagine glycans are attached at residues Asn405, Asn406, and Asn564.

The protein belongs to the glycosyltransferase GT106 family.

The protein localises to the membrane. It functions in the pathway glycan metabolism. The chain is O-fucosyltransferase 11 from Arabidopsis thaliana (Mouse-ear cress).